A 252-amino-acid chain; its full sequence is 2-succinyl-6-hydroxy-2,4-cyclohexadiene-1-carboxylate synthase (252 aa).

Belongs to the AB hydrolase superfamily. MenH family. Monomer.

It carries out the reaction 5-enolpyruvoyl-6-hydroxy-2-succinyl-cyclohex-3-ene-1-carboxylate = (1R,6R)-6-hydroxy-2-succinyl-cyclohexa-2,4-diene-1-carboxylate + pyruvate. It participates in quinol/quinone metabolism; 1,4-dihydroxy-2-naphthoate biosynthesis; 1,4-dihydroxy-2-naphthoate from chorismate: step 3/7. It functions in the pathway quinol/quinone metabolism; menaquinone biosynthesis. Its function is as follows. Catalyzes a proton abstraction reaction that results in 2,5-elimination of pyruvate from 2-succinyl-5-enolpyruvyl-6-hydroxy-3-cyclohexene-1-carboxylate (SEPHCHC) and the formation of 2-succinyl-6-hydroxy-2,4-cyclohexadiene-1-carboxylate (SHCHC). The sequence is that of 2-succinyl-6-hydroxy-2,4-cyclohexadiene-1-carboxylate synthase from Escherichia coli O157:H7.